An 89-amino-acid chain; its full sequence is Small ribosomal subunit protein uS15 (89 aa).

It belongs to the universal ribosomal protein uS15 family. In terms of assembly, part of the 30S ribosomal subunit. Forms a bridge to the 50S subunit in the 70S ribosome, contacting the 23S rRNA.

Its function is as follows. One of the primary rRNA binding proteins, it binds directly to 16S rRNA where it helps nucleate assembly of the platform of the 30S subunit by binding and bridging several RNA helices of the 16S rRNA. Functionally, forms an intersubunit bridge (bridge B4) with the 23S rRNA of the 50S subunit in the ribosome. The chain is Small ribosomal subunit protein uS15 from Rhizobium etli (strain CIAT 652).